We begin with the raw amino-acid sequence, 525 residues long: MSNIHEHKILILDFGSQYTQLIARRIREIGVYCELWAWDVSEEQIREFAPNGIILAGGPESVTAENSPRAPEYVFNAGVPVLGICYGMQTMSEQLGGKVIQGVGEGEFGYAQVEVQTESALFKAIEDAVSETGKPLLDVWMSHGDKVSAIPEGFVAVAKTETCPFAAMANEDKQFYGVQFHPEVTHTRQGKRMLEHFALEICGCPANWKPSSIIEDAIERLKEQIGDDEVILGLSGGVDSSVVAMLLHRAIGDKLTCVFVDNGLLRLNEAQQVMDMFGDHFGLNIVHVDAENRFLDAMAGEAEPEAKRKIIGRVFVEIFDEESKKCVNAKWLAQGTIYPDVIESAGSATGKAHCIKSHHNVGGLPDDMAMGLVEPLRELFKDEVRKIGLELGLPYDMLYRHPFPGPGLGVRVLGEVKKEYCDLLRLADAIFIEELHKADLYNKVSQAFTVFLPVRSVGVMGDGRKYDWVVSLRAVETIDFMTAHWAHLPYDFLGRVSNRIINEVDGISRVVYDISGKPPATIEWE.

The Glutamine amidotransferase type-1 domain occupies Lys8–Asn207. Cys85 (nucleophile) is an active-site residue. Residues His181 and Glu183 contribute to the active site. Residues Trp208–Arg400 enclose the GMPS ATP-PPase domain. Ser235–Ser241 is a binding site for ATP.

Homodimer.

It carries out the reaction XMP + L-glutamine + ATP + H2O = GMP + L-glutamate + AMP + diphosphate + 2 H(+). It participates in purine metabolism; GMP biosynthesis; GMP from XMP (L-Gln route): step 1/1. Its function is as follows. Catalyzes the synthesis of GMP from XMP. In Shewanella pealeana (strain ATCC 700345 / ANG-SQ1), this protein is GMP synthase [glutamine-hydrolyzing].